Consider the following 936-residue polypeptide: Isoleucine--tRNA ligase (936 aa).

The short motif at 58–68 (PYANGRAHLGT) is the 'HIGH' region element. Position 561 (E561) interacts with L-isoleucyl-5'-AMP. A 'KMSKS' region motif is present at residues 602–606 (KMSKS). K605 lines the ATP pocket. Positions 899, 902, 919, and 922 each coordinate Zn(2+).

It belongs to the class-I aminoacyl-tRNA synthetase family. IleS type 1 subfamily. Monomer. Zn(2+) is required as a cofactor.

The protein localises to the cytoplasm. It catalyses the reaction tRNA(Ile) + L-isoleucine + ATP = L-isoleucyl-tRNA(Ile) + AMP + diphosphate. Functionally, catalyzes the attachment of isoleucine to tRNA(Ile). As IleRS can inadvertently accommodate and process structurally similar amino acids such as valine, to avoid such errors it has two additional distinct tRNA(Ile)-dependent editing activities. One activity is designated as 'pretransfer' editing and involves the hydrolysis of activated Val-AMP. The other activity is designated 'posttransfer' editing and involves deacylation of mischarged Val-tRNA(Ile). The polypeptide is Isoleucine--tRNA ligase (Coxiella burnetii (strain CbuG_Q212) (Coxiella burnetii (strain Q212))).